Reading from the N-terminus, the 234-residue chain is Zinc finger FYVE domain-containing protein 21 (234 aa).

Residues 44 to 104 (DKECRRCMQC…QCAECALVSL (61 aa)) form an FYVE-type zinc finger. Zn(2+) contacts are provided by Cys-50, Cys-53, Cys-66, Cys-69, Cys-74, Cys-77, Cys-96, and Cys-99. The interval 107-234 (AEFYDKQLKV…AKLLYESRDQ (128 aa)) is PH-like.

In terms of assembly, interacts with PTK2/FAK1.

Its subcellular location is the cell junction. It is found in the focal adhesion. The protein localises to the cytoplasmic vesicle. The protein resides in the endosome. Its function is as follows. Plays a role in cell adhesion, and thereby in cell motility which requires repeated formation and disassembly of focal adhesions. Regulates microtubule-induced PTK2/FAK1 dephosphorylation, an event important for focal adhesion disassembly, as well as integrin beta-1/ITGB1 cell surface expression. The polypeptide is Zinc finger FYVE domain-containing protein 21 (ZFYVE21) (Homo sapiens (Human)).